The chain runs to 101 residues: Small ribosomal subunit protein uS14m (101 aa).

Belongs to the universal ribosomal protein uS14 family. In terms of assembly, component of the mitochondrial ribosome small subunit (28S) which comprises a 12S rRNA and about 30 distinct proteins. Interacts with LIAT1.

Its subcellular location is the mitochondrion. This Dictyostelium discoideum (Social amoeba) protein is Small ribosomal subunit protein uS14m (mrps14).